Here is a 230-residue protein sequence, read N- to C-terminus: Ion-translocating oxidoreductase complex subunit E (230 aa).

Over 1–17 the chain is Cytoplasmic; the sequence is MSENRTLMLNGMWNNNP. 2 consecutive transmembrane segments (helical) span residues 18–38 and 39–59; these read ALVQ…VTNA and LGLG…VSLV. The Cytoplasmic segment spans residues 60 to 68; the sequence is RDYVPKEVR. The chain crosses the membrane as a helical span at residues 69 to 89; sequence IPVFVMIIASLVTCVQLLMNA. At 90–92 the chain is on the periplasmic side; the sequence is YAY. Residues 93 to 113 form a helical membrane-spanning segment; the sequence is GLYLSLGIFIPLIVTNCIIIG. The Cytoplasmic portion of the chain corresponds to 114–123; the sequence is RAEAFASKND. Residues 124–144 traverse the membrane as a helical segment; sequence VLPAALDGFWMGLGMTSVLVV. Over 145–181 the chain is Periplasmic; sequence LGSLREIIGNGTLFDGADLLLGEWAKVLRIEVFHFDS. Residues 182–202 form a helical membrane-spanning segment; sequence AFLLALLPPGAFIGVGFLIAA. Topologically, residues 203 to 230 are cytoplasmic; it reads KSVIDKQIAARQPKQQKQAIERARVTNV.

It belongs to the NqrDE/RnfAE family. The complex is composed of six subunits: RnfA, RnfB, RnfC, RnfD, RnfE and RnfG.

It localises to the cell inner membrane. Functionally, part of a membrane-bound complex that couples electron transfer with translocation of ions across the membrane. The sequence is that of Ion-translocating oxidoreductase complex subunit E from Vibrio cholerae serotype O1 (strain ATCC 39541 / Classical Ogawa 395 / O395).